A 364-amino-acid polypeptide reads, in one-letter code: DNA polymerase IV (364 aa).

In terms of domain architecture, UmuC spans 14-198 (IIHIDMDAFF…LPIEKFHGVG (185 aa)). Mg(2+) is bound by residues aspartate 18 and aspartate 116. The active site involves glutamate 117.

The protein belongs to the DNA polymerase type-Y family. As to quaternary structure, monomer. Requires Mg(2+) as cofactor.

It is found in the cytoplasm. It carries out the reaction DNA(n) + a 2'-deoxyribonucleoside 5'-triphosphate = DNA(n+1) + diphosphate. Poorly processive, error-prone DNA polymerase involved in untargeted mutagenesis. Copies undamaged DNA at stalled replication forks, which arise in vivo from mismatched or misaligned primer ends. These misaligned primers can be extended by PolIV. Exhibits no 3'-5' exonuclease (proofreading) activity. May be involved in translesional synthesis, in conjunction with the beta clamp from PolIII. This chain is DNA polymerase IV, found in Streptococcus pyogenes serotype M1.